The sequence spans 228 residues: Caspase recruitment domain-containing protein 19 (228 aa).

Cysteines 7 and 77 form a disulfide. Residues 8–99 (DRLVQDTPFL…PLHSRLPSRH (92 aa)) enclose the CARD domain. Position 113 is a phosphoserine (Val113).

In terms of assembly, associates with BCL10 by CARD-CARD interaction. As to expression, expressed in ovary, testis, placenta, skeletal muscle, kidney, lung, heart and liver (at protein level). Expressed in thymus and brain.

It localises to the nucleus. The protein resides in the endoplasmic reticulum membrane. The protein localises to the mitochondrion membrane. In terms of biological role, plays a role in inhibiting the effects of BCL10-induced activation of NF-kappa-B. May inhibit the phosphorylation of BCL10 in a CARD-dependent manner. This chain is Caspase recruitment domain-containing protein 19 (CARD19), found in Homo sapiens (Human).